The sequence spans 243 residues: Zinc import ATP-binding protein ZnuC 2 (243 aa).

The 216-residue stretch at 3–218 (LSLHQLSVKF…PEYKVLFGLD (216 aa)) folds into the ABC transporter domain. 35–42 (GPNGSGKS) serves as a coordination point for ATP.

The protein belongs to the ABC transporter superfamily. Zinc importer (TC 3.A.1.15.5) family. In terms of assembly, the complex is composed of two ATP-binding proteins (ZnuC), two transmembrane proteins (ZnuB) and a solute-binding protein (ZnuA).

It is found in the cell inner membrane. It carries out the reaction Zn(2+)(out) + ATP(in) + H2O(in) = Zn(2+)(in) + ADP(in) + phosphate(in) + H(+)(in). In terms of biological role, part of the ABC transporter complex ZnuABC involved in zinc import. Responsible for energy coupling to the transport system. This is Zinc import ATP-binding protein ZnuC 2 from Aliivibrio fischeri (strain ATCC 700601 / ES114) (Vibrio fischeri).